Consider the following 250-residue polypeptide: 5'/3'-nucleotidase SurE (250 aa).

The a divalent metal cation site is built by aspartate 9, aspartate 10, serine 40, and asparagine 93.

It belongs to the SurE nucleotidase family. A divalent metal cation is required as a cofactor.

It is found in the cytoplasm. It carries out the reaction a ribonucleoside 5'-phosphate + H2O = a ribonucleoside + phosphate. The catalysed reaction is a ribonucleoside 3'-phosphate + H2O = a ribonucleoside + phosphate. It catalyses the reaction [phosphate](n) + H2O = [phosphate](n-1) + phosphate + H(+). In terms of biological role, nucleotidase with a broad substrate specificity as it can dephosphorylate various ribo- and deoxyribonucleoside 5'-monophosphates and ribonucleoside 3'-monophosphates with highest affinity to 3'-AMP. Also hydrolyzes polyphosphate (exopolyphosphatase activity) with the preference for short-chain-length substrates (P20-25). Might be involved in the regulation of dNTP and NTP pools, and in the turnover of 3'-mononucleotides produced by numerous intracellular RNases (T1, T2, and F) during the degradation of various RNAs. In Yersinia enterocolitica serotype O:8 / biotype 1B (strain NCTC 13174 / 8081), this protein is 5'/3'-nucleotidase SurE.